Reading from the N-terminus, the 984-residue chain is Probable translation initiation factor IF-2 (984 aa).

Residues 94–215 (VNGWYSVTVT…LPLLLLRFGI (122 aa)) form the DOD-type homing endonuclease domain. In terms of domain architecture, tr-type G spans 391–608 (TTETHNFVAN…LIAGLSQKYL (218 aa)). Residues 464-468 (DTPGH) and 518-521 (NKID) each bind GTP.

This sequence belongs to the TRAFAC class translation factor GTPase superfamily. Classic translation factor GTPase family. IF-2 subfamily. In terms of processing, this protein undergoes a protein self splicing that involves a post-translational excision of the intervening region (intein) followed by peptide ligation.

Function in general translation initiation by promoting the binding of the formylmethionine-tRNA to ribosomes. Seems to function along with eIF-2. The polypeptide is Probable translation initiation factor IF-2 (infB) (Pyrococcus furiosus (strain ATCC 43587 / DSM 3638 / JCM 8422 / Vc1)).